A 247-amino-acid chain; its full sequence is Cementoblastoma-derived protein 1 (247 aa).

Over residues 1-28 (MGTSSTDSQQAGHRRCSTSNTSAENLTC) the composition is skewed to polar residues. 2 disordered regions span residues 1 to 52 (MGTS…AGQP) and 147 to 183 (EENS…EKVK).

Post-translationally, phosphorylated. In terms of processing, N-glycosylated. As to expression, expressed by cementoblasts, a subpopulation of periodontal ligament cells and cells located around vessels in periodontium (at protein level).

The protein localises to the cytoplasm. Its subcellular location is the nucleus. Its function is as follows. May play a role in development of the periodontium which surrounds and supports the teeth by promoting the differentiation of multi-potent cells from the periodontal ligament into cementoblasts to form the cementum. Binds hydroxyapatite and may promote the biomineralization of the cementum. Also promotes cell proliferation. This chain is Cementoblastoma-derived protein 1, found in Homo sapiens (Human).